Reading from the N-terminus, the 430-residue chain is Adenylosuccinate synthetase (430 aa).

GTP-binding positions include 12 to 18 (GDEGKGK) and 40 to 42 (GHT). Aspartate 13 (proton acceptor) is an active-site residue. Positions 13 and 40 each coordinate Mg(2+). Residues 13–16 (DEGK), 38–41 (NAGH), threonine 128, arginine 142, glutamine 223, threonine 238, and arginine 302 each bind IMP. Residue histidine 41 is the Proton donor of the active site. Position 298–304 (298–304 (TTTGRPR)) interacts with substrate. GTP contacts are provided by residues arginine 304, 330–332 (SID), and 412–414 (SVG).

It belongs to the adenylosuccinate synthetase family. As to quaternary structure, homodimer. It depends on Mg(2+) as a cofactor.

The protein localises to the cytoplasm. The catalysed reaction is IMP + L-aspartate + GTP = N(6)-(1,2-dicarboxyethyl)-AMP + GDP + phosphate + 2 H(+). Its pathway is purine metabolism; AMP biosynthesis via de novo pathway; AMP from IMP: step 1/2. Plays an important role in the de novo pathway of purine nucleotide biosynthesis. Catalyzes the first committed step in the biosynthesis of AMP from IMP. The protein is Adenylosuccinate synthetase of Streptococcus pyogenes serotype M6 (strain ATCC BAA-946 / MGAS10394).